Here is a 185-residue protein sequence, read N- to C-terminus: Large ribosomal subunit protein uL18 (185 aa).

The protein belongs to the universal ribosomal protein uL18 family. In terms of assembly, part of the 50S ribosomal subunit. Contacts the 5S and 23S rRNAs.

Functionally, this is one of the proteins that bind and probably mediate the attachment of the 5S RNA into the large ribosomal subunit, where it forms part of the central protuberance. The protein is Large ribosomal subunit protein uL18 of Halorubrum lacusprofundi (strain ATCC 49239 / DSM 5036 / JCM 8891 / ACAM 34).